The sequence spans 2715 residues: Chromodomain-helicase-DNA-binding protein 6 (2715 aa).

Residues 1 to 11 (MKMKIQKKEKQ) show a composition bias toward basic and acidic residues. Disordered stretches follow at residues 1–30 (MKMKIQKKEKQLSNLKVLNHSPMSDASVNF) and 66–244 (EEAA…QVKR). A required for DNA-dependent ATPase activity region spans residues 1–747 (MKMKIQKKEK…MMELRKCCNH (747 aa)). Positions 12-27 (LSNLKVLNHSPMSDAS) are enriched in polar residues. The span at 123 to 172 (EPKEPKEPRKAKEPKKAKEHKEPKQKDGAKKARKPREASGTKEAKEKRSC) shows a compositional bias: basic and acidic residues. 2 consecutive Chromo domains span residues 292–343 (NIIE…KDPR) and 375–439 (VEVD…KHVE). Residues 473 to 647 (LFNWYNRKNC…FSLLNFLEPS (175 aa)) enclose the Helicase ATP-binding domain. 486–493 (DEMGLGKT) contributes to the ATP binding site. The DEAH box motif lies at 598–601 (DEAH). The region spanning 787 to 956 (LIDKLLPKLI…LSKMEVEDLL (170 aa)) is the Helicase C-terminal domain. The segment at 1318-1390 (KSLSAEQGVT…SDPDKSPWPV (73 aa)) is disordered. A compositionally biased stretch (polar residues) spans 1321 to 1330 (SAEQGVTDGT). 2 stretches are compositionally biased toward basic and acidic residues: residues 1333 to 1351 (IPERGNTDKEDNAEDKVDG) and 1367 to 1376 (FSEKKDDSRA). The 55-residue stretch at 1449 to 1503 (RWTRREQADFYRTVSSFGVVYDQEKKTFDWTQFRIISRLDKKSDESLEQYFYSFV) folds into the Myb-like domain. Positions 2027 to 2038 (FENKDDYDRDGN) are enriched in basic and acidic residues. 6 disordered regions span residues 2027–2063 (FENKDDYDRDGNCHSQDYPGKYSEEESKSSTSGITGD), 2116–2148 (SQQYEPSGTLPTPVLTSSAGSRTSLSEPEAAEH), 2321–2351 (QATLSTTHPEGPGPATSAPEPATAASSQAEK), 2373–2422 (PGFG…FLPE), 2547–2602 (TSTA…PAIT), and 2648–2715 (VGLE…NDTN). Polar residues predominate over residues 2116–2141 (SQQYEPSGTLPTPVLTSSAGSRTSLS). Positions 2329–2346 (PEGPGPATSAPEPATAAS) are enriched in low complexity. The span at 2547–2560 (TSTAPASLSSTTKS) shows a compositional bias: low complexity. Composition is skewed to basic and acidic residues over residues 2567 to 2588 (KTAEDKPSSHDVKTDTLAEDKP) and 2706 to 2715 (ALKDSNNDTN).

Belongs to the SNF2/RAD54 helicase family. As to quaternary structure, interacts with NFE2L2; involved in activation of the transcription. (Microbial infection) Interacts with the influenza A polymerase complex composed fo PB1, PB2 and PA. In terms of assembly, (Microbial infection) Interacts (via N-terminus) with human papillomavirus protein E8^E2C (via C-terminus); this interaction induces transcriptional repression of the viral genome. Widely expressed.

Its subcellular location is the nucleus. It is found in the nucleoplasm. The enzyme catalyses ATP + H2O = ADP + phosphate + H(+). Its function is as follows. ATP-dependent chromatin-remodeling factor. Regulates transcription by disrupting nucleosomes in a largely non-sliding manner which strongly increases the accessibility of chromatin; nucleosome disruption requires ATP. Activates transcription of specific genes in response to oxidative stress through interaction with NFE2L2. In terms of biological role, (Microbial infection) Acts as a transcriptional repressor of different viruses including influenza virus or papillomavirus. During influenza virus infection, the viral polymerase complex localizes CHD6 to inactive chromatin where it gets degraded in a proteasome independent-manner. This chain is Chromodomain-helicase-DNA-binding protein 6 (CHD6), found in Homo sapiens (Human).